The primary structure comprises 366 residues: 1-deoxy-D-xylulose 5-phosphate reductoisomerase (366 aa).

NADPH contacts are provided by Thr-7, Gly-8, Ser-9, Ile-10, Gly-31, Asn-33, and Asn-111. A 1-deoxy-D-xylulose 5-phosphate-binding site is contributed by Lys-112. Glu-113 contributes to the NADPH binding site. Residue Asp-131 participates in Mn(2+) binding. Residues Ser-132, Glu-133, Ser-162, and His-185 each coordinate 1-deoxy-D-xylulose 5-phosphate. Glu-133 contributes to the Mn(2+) binding site. Gly-191 lines the NADPH pocket. 4 residues coordinate 1-deoxy-D-xylulose 5-phosphate: Ser-198, Asn-203, Lys-204, and Glu-207. Glu-207 serves as a coordination point for Mn(2+).

Belongs to the DXR family. Mg(2+) serves as cofactor. Requires Mn(2+) as cofactor.

The catalysed reaction is 2-C-methyl-D-erythritol 4-phosphate + NADP(+) = 1-deoxy-D-xylulose 5-phosphate + NADPH + H(+). The protein operates within isoprenoid biosynthesis; isopentenyl diphosphate biosynthesis via DXP pathway; isopentenyl diphosphate from 1-deoxy-D-xylulose 5-phosphate: step 1/6. Its function is as follows. Catalyzes the NADPH-dependent rearrangement and reduction of 1-deoxy-D-xylulose-5-phosphate (DXP) to 2-C-methyl-D-erythritol 4-phosphate (MEP). The polypeptide is 1-deoxy-D-xylulose 5-phosphate reductoisomerase (Nautilia profundicola (strain ATCC BAA-1463 / DSM 18972 / AmH)).